A 132-amino-acid polypeptide reads, in one-letter code: ATP synthase epsilon chain (132 aa).

This sequence belongs to the ATPase epsilon chain family. As to quaternary structure, F-type ATPases have 2 components, CF(1) - the catalytic core - and CF(0) - the membrane proton channel. CF(1) has five subunits: alpha(3), beta(3), gamma(1), delta(1), epsilon(1). CF(0) has three main subunits: a, b and c.

It is found in the cell membrane. Produces ATP from ADP in the presence of a proton gradient across the membrane. The sequence is that of ATP synthase epsilon chain from Desulfitobacterium hafniense (strain DSM 10664 / DCB-2).